Reading from the N-terminus, the 303-residue chain is Quinolinate synthase (303 aa).

2 residues coordinate iminosuccinate: H24 and S41. A [4Fe-4S] cluster-binding site is contributed by C86. Iminosuccinate is bound by residues 112–114 (YIN) and S129. [4Fe-4S] cluster is bound at residue C172. Iminosuccinate is bound by residues 198–200 (HPE) and T215. C260 contacts [4Fe-4S] cluster.

This sequence belongs to the quinolinate synthase family. Type 2 subfamily. [4Fe-4S] cluster is required as a cofactor.

It localises to the cytoplasm. The catalysed reaction is iminosuccinate + dihydroxyacetone phosphate = quinolinate + phosphate + 2 H2O + H(+). It participates in cofactor biosynthesis; NAD(+) biosynthesis; quinolinate from iminoaspartate: step 1/1. Functionally, catalyzes the condensation of iminoaspartate with dihydroxyacetone phosphate to form quinolinate. This chain is Quinolinate synthase, found in Caldicellulosiruptor saccharolyticus (strain ATCC 43494 / DSM 8903 / Tp8T 6331).